The primary structure comprises 198 residues: MFGFFCSLVSSLSRWFLWRRLLLLLLLLLLNLPLQVKFAMLELHSFKCPAGEYWSKDVCCKNCSAGTFVKAPCEIPHTQGQCEKCHPGTFTEKDNYLDACILCSTCDKDQEMVADCSATSDRKCQCRTGLYYYDPKFPESCRPCTKCPQGIPVLQECNSTANTVCSSSVSNPRNRLFLLLSPLSVLIVSVVVFRIIRR.

Residues 1 to 20 (MFGFFCSLVSSLSRWFLWRR) are Cytoplasmic-facing. The helical; Signal-anchor for type II membrane protein transmembrane segment at 21–41 (LLLLLLLLLLNLPLQVKFAML) threads the bilayer. The Extracellular portion of the chain corresponds to 42–198 (ELHSFKCPAG…SVVVFRIIRR (157 aa)). TNFR-Cys repeat units follow at residues 47-82 (KCPA…QGQC), 84-124 (KCHP…DRKC), and 125-165 (QCRT…NTVC). Cystine bridges form between C48–C59, C60–C73, C63–C82, C85–C100, C103–C116, C106–C124, C126–C141, C144–C157, and C147–C165. The N-linked (GlcNAc...) asparagine glycan is linked to N62. N-linked (GlcNAc...) asparagine glycosylation is present at N158.

Ubiquitous.

Its subcellular location is the cell membrane. The protein resides in the secreted. Receptor for the cytotoxic ligand TNFSF10/TRAIL. Lacks a cytoplasmic death domain and hence is not capable of inducing apoptosis. Protects cells against TRAIL mediated apoptosis possibly through ligand competition. Cannot induce the NF-kappa-B pathway. In Mus musculus (Mouse), this protein is Tumor necrosis factor receptor superfamily member 22 (Tnfrsf22).